Reading from the N-terminus, the 714-residue chain is Polyribonucleotide nucleotidyltransferase (714 aa).

The Mg(2+) site is built by aspartate 493 and aspartate 499. Residues 559-618 (PRIETTKIPADRIGELIGPGGKNIKAIQAESGADINIEEDGTVHIYAAKQEGLDRALELV) form the KH domain. The 69-residue stretch at 628 to 696 (GELYTGKIVS…DKGRVKMSIR (69 aa)) folds into the S1 motif domain.

It belongs to the polyribonucleotide nucleotidyltransferase family. Mg(2+) is required as a cofactor.

It localises to the cytoplasm. The enzyme catalyses RNA(n+1) + phosphate = RNA(n) + a ribonucleoside 5'-diphosphate. Involved in mRNA degradation. Catalyzes the phosphorolysis of single-stranded polyribonucleotides processively in the 3'- to 5'-direction. The sequence is that of Polyribonucleotide nucleotidyltransferase from Akkermansia muciniphila (strain ATCC BAA-835 / DSM 22959 / JCM 33894 / BCRC 81048 / CCUG 64013 / CIP 107961 / Muc).